Consider the following 312-residue polypeptide: Glyoxylate/hydroxypyruvate reductase A (312 aa).

Arginine 227 is a catalytic residue. The Proton donor role is filled by histidine 275.

The protein belongs to the D-isomer specific 2-hydroxyacid dehydrogenase family. GhrA subfamily.

The protein localises to the cytoplasm. The catalysed reaction is glycolate + NADP(+) = glyoxylate + NADPH + H(+). It carries out the reaction (R)-glycerate + NAD(+) = 3-hydroxypyruvate + NADH + H(+). It catalyses the reaction (R)-glycerate + NADP(+) = 3-hydroxypyruvate + NADPH + H(+). Its function is as follows. Catalyzes the NADPH-dependent reduction of glyoxylate and hydroxypyruvate into glycolate and glycerate, respectively. In Salmonella dublin (strain CT_02021853), this protein is Glyoxylate/hydroxypyruvate reductase A.